A 292-amino-acid polypeptide reads, in one-letter code: Shikimate dehydrogenase (NADP(+)) (292 aa).

Residues 25-27 (SKS) and Thr-72 contribute to the shikimate site. Lys-76 serves as the catalytic Proton acceptor. 2 residues coordinate shikimate: Asn-97 and Asp-113. NADP(+) contacts are provided by residues 137 to 141 (GAGGA), 161 to 166 (NRTQSK), and Met-230. Position 232 (Tyr-232) interacts with shikimate. Gly-254 contributes to the NADP(+) binding site.

This sequence belongs to the shikimate dehydrogenase family. As to quaternary structure, homodimer.

The catalysed reaction is shikimate + NADP(+) = 3-dehydroshikimate + NADPH + H(+). Its pathway is metabolic intermediate biosynthesis; chorismate biosynthesis; chorismate from D-erythrose 4-phosphate and phosphoenolpyruvate: step 4/7. Functionally, involved in the biosynthesis of the chorismate, which leads to the biosynthesis of aromatic amino acids. Catalyzes the reversible NADPH linked reduction of 3-dehydroshikimate (DHSA) to yield shikimate (SA). This Shewanella sp. (strain ANA-3) protein is Shikimate dehydrogenase (NADP(+)).